We begin with the raw amino-acid sequence, 886 residues long: DNA repair and recombination protein RAD54B (886 aa).

Residues 1–12 are compositionally biased toward polar residues; sequence MRRSAAPSQVQG. The segment at 1–95 is disordered; that stretch reads MRRSAAPSQV…ASKEITESKA (95 aa). At S14 the chain carries Phosphoserine. Residues 47-62 are compositionally biased toward polar residues; sequence AEQSQNDPGVCSSNPC. 2 stretches are compositionally biased toward basic and acidic residues: residues 67-76 and 86-95; these read IPREVGDGTR and ASKEITESKA. Positions 291–458 constitute a Helicase ATP-binding domain; the sequence is GMRAVGKCGA…FALVDFVNPG (168 aa). ATP is bound at residue 304-311; that stretch reads DEMGLGKT. Positions 409–412 match the DEGH box motif; it reads DEGH. The 162-residue stretch at 627–788 folds into the Helicase C-terminal domain; the sequence is KLLAVIHELR…HIQFSVEELK (162 aa).

The protein belongs to the SNF2/RAD54 helicase family. In terms of assembly, interacts with RAD51 through the NH2-terminal domain.

Its subcellular location is the nucleus. In terms of biological role, involved in DNA repair and mitotic recombination. May play an active role in recombination processes in concert with other members of the RAD52 epistasis group. The polypeptide is DNA repair and recombination protein RAD54B (Rad54b) (Mus musculus (Mouse)).